The primary structure comprises 388 residues: Succinate--CoA ligase [ADP-forming] subunit beta (388 aa).

An ATP-grasp domain is found at 9–244 (KQLFARYGLP…QSQEDPREAQ (236 aa)). Residues Lys46, 53-55 (GRG), Glu99, Thr102, and Glu107 each bind ATP. Residues Asn199 and Asp213 each contribute to the Mg(2+) site. Residues Asn264 and 321-323 (GIV) contribute to the substrate site.

Belongs to the succinate/malate CoA ligase beta subunit family. Heterotetramer of two alpha and two beta subunits. It depends on Mg(2+) as a cofactor.

The catalysed reaction is succinate + ATP + CoA = succinyl-CoA + ADP + phosphate. The enzyme catalyses GTP + succinate + CoA = succinyl-CoA + GDP + phosphate. Its pathway is carbohydrate metabolism; tricarboxylic acid cycle; succinate from succinyl-CoA (ligase route): step 1/1. Functionally, succinyl-CoA synthetase functions in the citric acid cycle (TCA), coupling the hydrolysis of succinyl-CoA to the synthesis of either ATP or GTP and thus represents the only step of substrate-level phosphorylation in the TCA. The beta subunit provides nucleotide specificity of the enzyme and binds the substrate succinate, while the binding sites for coenzyme A and phosphate are found in the alpha subunit. The chain is Succinate--CoA ligase [ADP-forming] subunit beta from Salmonella choleraesuis (strain SC-B67).